The chain runs to 154 residues: 3-hydroxyacyl-[acyl-carrier-protein] dehydratase FabZ (154 aa).

Histidine 54 is an active-site residue.

This sequence belongs to the thioester dehydratase family. FabZ subfamily.

The protein localises to the cytoplasm. The enzyme catalyses a (3R)-hydroxyacyl-[ACP] = a (2E)-enoyl-[ACP] + H2O. Its function is as follows. Involved in unsaturated fatty acids biosynthesis. Catalyzes the dehydration of short chain beta-hydroxyacyl-ACPs and long chain saturated and unsaturated beta-hydroxyacyl-ACPs. In Shewanella sp. (strain MR-4), this protein is 3-hydroxyacyl-[acyl-carrier-protein] dehydratase FabZ.